We begin with the raw amino-acid sequence, 309 residues long: L-arabinose 1-dehydrogenase (NAD(P)(+)) (309 aa).

NADP(+) is bound by residues isoleucine 15 and 37 to 38 (SR). The active-site Proton donor is lysine 91. Aspartate 169 provides a ligand contact to NADP(+).

It belongs to the Gfo/Idh/MocA family. Monomer.

It catalyses the reaction alpha-L-arabinopyanose + NAD(+) = L-arabinono-1,4-lactone + NADH + H(+). The enzyme catalyses alpha-L-arabinopyanose + NADP(+) = L-arabinono-1,4-lactone + NADPH + H(+). It carries out the reaction D-galactose + NAD(+) = D-galactono-1,4-lactone + NADH + H(+). The catalysed reaction is D-galactose + NADP(+) = D-galactono-1,5-lactone + NADPH + H(+). It functions in the pathway carbohydrate degradation; L-arabinose degradation via L-arabinono-1,4-lactone pathway. In terms of biological role, catalyzes the NAD(P)(+)-dependent conversion of L-arabinose to L-arabino-gamma-lactone. Is involved in a degradation pathway of L-arabinose that allows A.brasilense to grow on L-arabinose as a sole carbon source. Prefers NADP(+) to NAD(+) as electron acceptor. Displays high catalytic efficiency for both L-arabinose and D-galactose in vitro. However, the enzyme appears to be involved in the metabolism of L-arabinose but not D-galactose in vivo. To a lesser extent, is also active on D-talose and D-xylose as substrates in vitro, but not with D-arabinose, D-glucose, D-ribose, L-xylose, L-mannose, L-lyxose, and D-fructose. In Azospirillum brasilense, this protein is L-arabinose 1-dehydrogenase (NAD(P)(+)) (araA).